The following is a 453-amino-acid chain: tRNA modification GTPase MnmE (453 aa).

The (6S)-5-formyl-5,6,7,8-tetrahydrofolate site is built by Arg22, Glu79, and Lys119. Positions 215 to 376 (GMKVVIAGRP…LKLHLKSLMG (162 aa)) constitute a TrmE-type G domain. Asn225 contacts K(+). Residues 225 to 230 (NAGKSS), 244 to 250 (TEIAGTT), 269 to 272 (DTAG), and 334 to 337 (NKAD) each bind GTP. Ser229 contacts Mg(2+). The K(+) site is built by Thr244, Ile246, and Thr249. Thr250 serves as a coordination point for Mg(2+). Lys453 is a binding site for (6S)-5-formyl-5,6,7,8-tetrahydrofolate.

It belongs to the TRAFAC class TrmE-Era-EngA-EngB-Septin-like GTPase superfamily. TrmE GTPase family. Homodimer. Heterotetramer of two MnmE and two MnmG subunits. K(+) is required as a cofactor.

Its subcellular location is the cytoplasm. In terms of biological role, exhibits a very high intrinsic GTPase hydrolysis rate. Involved in the addition of a carboxymethylaminomethyl (cmnm) group at the wobble position (U34) of certain tRNAs, forming tRNA-cmnm(5)s(2)U34. This is tRNA modification GTPase MnmE from Shewanella sp. (strain W3-18-1).